Consider the following 227-residue polypeptide: Orotidine 5'-phosphate decarboxylase (227 aa).

Substrate-binding positions include aspartate 12, lysine 34, 61–70 (DLKLHDIPNT), threonine 117, arginine 178, glutamine 187, glycine 207, and arginine 208. The active-site Proton donor is lysine 63.

This sequence belongs to the OMP decarboxylase family. Type 1 subfamily. As to quaternary structure, homodimer.

The enzyme catalyses orotidine 5'-phosphate + H(+) = UMP + CO2. It functions in the pathway pyrimidine metabolism; UMP biosynthesis via de novo pathway; UMP from orotate: step 2/2. Functionally, catalyzes the decarboxylation of orotidine 5'-monophosphate (OMP) to uridine 5'-monophosphate (UMP). The polypeptide is Orotidine 5'-phosphate decarboxylase (Anaeromyxobacter sp. (strain K)).